The primary structure comprises 456 residues: Smoothelin-like protein 2 (456 aa).

Residues 24–88 adopt a coiled-coil conformation; sequence LEGAVRALHE…RQVEALGLAT (65 aa). Thr96 carries the post-translational modification Phosphothreonine. Phosphoserine occurs at positions 98, 126, and 131. Positions 120-129 are enriched in polar residues; it reads HATFSLSGRS. 3 disordered regions span residues 120-140, 154-190, and 220-310; these read HATFSLSGRSPSVEHDEASDL, GHQLDAGPANGSSEVQTSSAQEPPRPRPVSLSLRMPH, and VGGF…GAQA. The segment covering 131-140 has biased composition (basic and acidic residues); that stretch reads SVEHDEASDL. A compositionally biased stretch (polar residues) spans 163–174; sequence NGSSEVQTSSAQ. Low complexity predominate over residues 242–251; sequence SSSFTRSLSG. Phosphoserine occurs at positions 250, 252, and 265. Residues 268-279 show a composition bias toward pro residues; sequence LVTPPQSPPSSQ. Thr270 is modified (phosphothreonine). Ser274 bears the Phosphoserine mark. The segment covering 298–308 has biased composition (polar residues); that stretch reads RSQTLPRTSGA. At Ser339 the chain carries Phosphoserine. The 108-residue stretch at 346–453 folds into the Calponin-homology (CH) domain; it reads SSIKQILLEW…YVQSLYNHLR (108 aa).

Belongs to the smoothelin family.

The chain is Smoothelin-like protein 2 (Smtnl2) from Mus musculus (Mouse).